The sequence spans 710 residues: PWWP domain-containing DNA repair factor 3A (710 aa).

Residues 106 to 160 (QESSAGTGRADRSLRGKPMEHVSSPCDSNSSSLPRGDVLGSSRPHRRRPCVQQSL) form a disordered region. Over residues 114–125 (RADRSLRGKPME) the composition is skewed to basic and acidic residues. Positions 128-137 (SSPCDSNSSS) are enriched in low complexity. Position 161 is a phosphoserine (Ser-161). Disordered regions lie at residues 177–204 (KKGL…ESGS) and 230–398 (NGSS…EEPP). Positions 288-297 (PSACSEPGEC) are enriched in low complexity. Phosphoserine occurs at positions 374 and 375. The segment covering 375 to 385 (SEESMGSNSMR) has biased composition (polar residues). The PWWP domain maps to 411 to 472 (VGMLVWHKHK…KHFDCKEKQT (62 aa)).

It belongs to the PWWP3A family. As to quaternary structure, interacts with TP53BP1 (via BRCT domain); the interaction is not dependent on its phosphorylation status. Binds nucleosomes. Interacts with trimethylated 'Lys-36' of histone H3 (H3K36me3) (in vitro).

Its subcellular location is the nucleus. In terms of biological role, involved in the DNA damage response pathway by contributing to the maintenance of chromatin architecture. Recruited to the vicinity of DNA breaks by TP53BP1 and plays an accessory role to facilitate damage-induced chromatin changes and promoting chromatin relaxation. Required for efficient DNA repair and cell survival following DNA damage. The sequence is that of PWWP domain-containing DNA repair factor 3A from Homo sapiens (Human).